The primary structure comprises 77 residues: Small ribosomal subunit protein bS18 (77 aa).

It belongs to the bacterial ribosomal protein bS18 family. As to quaternary structure, part of the 30S ribosomal subunit. Forms a tight heterodimer with protein bS6.

In terms of biological role, binds as a heterodimer with protein bS6 to the central domain of the 16S rRNA, where it helps stabilize the platform of the 30S subunit. The chain is Small ribosomal subunit protein bS18 from Lactobacillus gasseri (strain ATCC 33323 / DSM 20243 / BCRC 14619 / CIP 102991 / JCM 1131 / KCTC 3163 / NCIMB 11718 / NCTC 13722 / AM63).